The primary structure comprises 27 residues: Chitinase 47 kDa (27 aa).

A GH18 domain is found at 3-27 (SKVVGYFTEWGTYDRKYYVKNIEXS).

Belongs to the glycosyl hydrolase 18 family. Chitinase class II subfamily. As to quaternary structure, homodimer.

It catalyses the reaction Random endo-hydrolysis of N-acetyl-beta-D-glucosaminide (1-&gt;4)-beta-linkages in chitin and chitodextrins.. Its function is as follows. Able to cleave chitin oligomers from N=3 to 6. This chain is Chitinase 47 kDa, found in Streptomyces olivaceoviridis (Streptomyces corchorusii).